Here is a 372-residue protein sequence, read N- to C-terminus: tRNA-specific 2-thiouridylase MnmA (372 aa).

ATP-binding positions include 13–20 and Met39; that span reads GMSGGVDS. The interval 99–101 is interaction with target base in tRNA; that stretch reads NPD. Residue Cys104 is the Nucleophile of the active site. Cys104 and Cys200 are disulfide-bonded. Gly128 serves as a coordination point for ATP. The interaction with tRNA stretch occupies residues 150–152; it reads KDQ. Cys200 (cysteine persulfide intermediate) is an active-site residue. The interval 310 to 311 is interaction with tRNA; that stretch reads RY.

It belongs to the MnmA/TRMU family.

The protein resides in the cytoplasm. It catalyses the reaction S-sulfanyl-L-cysteinyl-[protein] + uridine(34) in tRNA + AH2 + ATP = 2-thiouridine(34) in tRNA + L-cysteinyl-[protein] + A + AMP + diphosphate + H(+). Catalyzes the 2-thiolation of uridine at the wobble position (U34) of tRNA, leading to the formation of s(2)U34. The chain is tRNA-specific 2-thiouridylase MnmA from Bacillus licheniformis (strain ATCC 14580 / DSM 13 / JCM 2505 / CCUG 7422 / NBRC 12200 / NCIMB 9375 / NCTC 10341 / NRRL NRS-1264 / Gibson 46).